Consider the following 720-residue polypeptide: Hexanoyl-CoA synthase (720 aa).

A helical transmembrane segment spans residues 242 to 262 (VDAVVIYLAIVLAGYVVVSIA). 290–293 (RGKK) contacts CoA. Residues 477 to 479 (GEA), 499 to 504 (EMCGGT), E585, and R607 each bind ATP. CoA is bound at residue G615. K618 contributes to the ATP binding site. A CoA-binding site is contributed by Q681.

This sequence belongs to the ATP-dependent AMP-binding enzyme family. The cofactor is Mg(2+). Accumulates in glandular trichomes, especially in female flowers. Present at low levels in roots, stems and leaves.

It localises to the cytoplasm. The protein resides in the cytosol. The protein localises to the membrane. The catalysed reaction is hexanoate + ATP + CoA = hexanoyl-CoA + AMP + diphosphate. Its pathway is secondary metabolite biosynthesis; terpenoid biosynthesis. Its activity is regulated as follows. Inhibitied by high CoA concentrations. Its function is as follows. Involved in the biosynthesis of cannabinoids-related terpenophenolic natural products, which have pharmacological activity. Acyl-activating enzyme that catalyzes the conversion of hexanoic acid to hexanoyl-CoA, precursor of the cannabinoid pathway. Can also activate other fatty acids including heptanoate, octanoate and nonanoate. This is Hexanoyl-CoA synthase from Cannabis sativa (Hemp).